A 351-amino-acid polypeptide reads, in one-letter code: Uroporphyrinogen decarboxylase (351 aa).

Substrate contacts are provided by residues 25 to 29 (RQAGR), Asp74, Tyr151, Ser206, and His325.

This sequence belongs to the uroporphyrinogen decarboxylase family. As to quaternary structure, homodimer.

The protein resides in the cytoplasm. The enzyme catalyses uroporphyrinogen III + 4 H(+) = coproporphyrinogen III + 4 CO2. It functions in the pathway porphyrin-containing compound metabolism; protoporphyrin-IX biosynthesis; coproporphyrinogen-III from 5-aminolevulinate: step 4/4. In terms of biological role, catalyzes the decarboxylation of four acetate groups of uroporphyrinogen-III to yield coproporphyrinogen-III. The chain is Uroporphyrinogen decarboxylase from Chlorobium phaeobacteroides (strain DSM 266 / SMG 266 / 2430).